The sequence spans 451 residues: Gamma-aminobutyric acid receptor subunit alpha-2 (451 aa).

An N-terminal signal peptide occupies residues 1-28; that stretch reads MRTKLSTCNVWFPLLVLLVWNPARLVLA. Over 29-249 the chain is Extracellular; sequence NIQEDEAKNN…MTAHFHLKRK (221 aa). Residue N38 is glycosylated (N-linked (GlcNAc...) asparagine). R94 provides a ligand contact to 4-aminobutanoate. Residues N114 and N138 are each glycosylated (N-linked (GlcNAc...) asparagine). T157 is a 4-aminobutanoate binding site. Cysteines 166 and 180 form a disulfide. Helical transmembrane passes span 250 to 270, 281 to 300, and 312 to 332; these read IGYFVIQTYLPCIMTVILSQV, ARTVFGVTTVLTMTTLSISA, and AMDWFIAVCYAFVFSALIEFA. Residues 333-420 lie on the Cytoplasmic side of the membrane; that stretch reads TVNYFTKRGW…FNSVSKIDRM (88 aa). Residues 389–408 are disordered; that stretch reads KSATTPEPNKKPENKPAEAK. Basic and acidic residues predominate over residues 396 to 408; the sequence is PNKKPENKPAEAK. A helical membrane pass occupies residues 421–441; that stretch reads SRIVFPVLFGTFNLVYWATYL. Residues 442-451 are Extracellular-facing; it reads NREPVLGVSP.

It belongs to the ligand-gated ion channel (TC 1.A.9) family. Gamma-aminobutyric acid receptor (TC 1.A.9.5) subfamily. GABRA2 sub-subfamily. In terms of assembly, heteropentamer, formed by a combination of alpha (GABRA1-6), beta (GABRB1-3), gamma (GABRG1-3), delta (GABRD), epsilon (GABRE), rho (GABRR1-3), pi (GABRP) and theta (GABRQ) subunits, each subunit exhibiting distinct physiological and pharmacological properties. Binds UBQLN1. Interacts with KIF21B. Interacts with LHFPL4. Interacts with SHISA7; interaction leads to the regulation of GABA(A) receptor trafficking, channel deactivation kinetics and pharmacology. Post-translationally, glycosylated. Expressed in brain (at protein level).

The protein resides in the postsynaptic cell membrane. The protein localises to the cell membrane. It is found in the cytoplasmic vesicle membrane. It localises to the cell projection. Its subcellular location is the dendrite. The enzyme catalyses chloride(in) = chloride(out). With respect to regulation, activated by pentobarbital. Inhibited by the antagonist bicuculline. Its function is as follows. Alpha subunit of the heteropentameric ligand-gated chloride channel gated by gamma-aminobutyric acid (GABA), a major inhibitory neurotransmitter in the brain. GABA-gated chloride channels, also named GABA(A) receptors (GABAAR), consist of five subunits arranged around a central pore and contain GABA active binding site(s) located at the alpha and beta subunit interface(s). When activated by GABA, GABAARs selectively allow the flow of chloride anions across the cell membrane down their electrochemical gradient. Chloride influx into the postsynaptic neuron following GABAAR opening decreases the neuron ability to generate a new action potential, thereby reducing nerve transmission. The alpha-2 subunit exhibits synaptogenic activity together with beta-2 and very little to no activity together with beta-3, the gamma-2 subunit being necessary but not sufficient to induce rapid synaptic contacts formation. The polypeptide is Gamma-aminobutyric acid receptor subunit alpha-2 (Rattus norvegicus (Rat)).